Consider the following 406-residue polypeptide: Imidazolonepropionase (406 aa).

Fe(3+) is bound by residues His72 and His74. The Zn(2+) site is built by His72 and His74. Arg81, Tyr144, and His177 together coordinate 4-imidazolone-5-propanoate. Residue Tyr144 participates in N-formimidoyl-L-glutamate binding. His242 contributes to the Fe(3+) binding site. His242 is a Zn(2+) binding site. Gln245 provides a ligand contact to 4-imidazolone-5-propanoate. Asp317 is a Fe(3+) binding site. Asp317 provides a ligand contact to Zn(2+). N-formimidoyl-L-glutamate is bound by residues Asn319 and Gly321. A 4-imidazolone-5-propanoate-binding site is contributed by Thr322.

Belongs to the metallo-dependent hydrolases superfamily. HutI family. It depends on Zn(2+) as a cofactor. The cofactor is Fe(3+).

The protein resides in the cytoplasm. It carries out the reaction 4-imidazolone-5-propanoate + H2O = N-formimidoyl-L-glutamate. Its pathway is amino-acid degradation; L-histidine degradation into L-glutamate; N-formimidoyl-L-glutamate from L-histidine: step 3/3. In terms of biological role, catalyzes the hydrolytic cleavage of the carbon-nitrogen bond in imidazolone-5-propanoate to yield N-formimidoyl-L-glutamate. It is the third step in the universal histidine degradation pathway. The polypeptide is Imidazolonepropionase (Yersinia enterocolitica serotype O:8 / biotype 1B (strain NCTC 13174 / 8081)).